The chain runs to 574 residues: Membrane protein insertase YidC (574 aa).

The chain crosses the membrane as a helical span at residues 6–26 (VFLIFAWLMVAALLWMEWGKD). The interval 45-77 (RDPDAAAPSAANVPSAQPIPQAGAPGTVPATSS) is disordered. The next 5 membrane-spanning stretches (helical) occupy residues 356-376 (FSIM…LHSF), 380-400 (WGWA…PLSA), 447-467 (GGCL…WVLV), 489-509 (PYFI…KLTP), and 525-545 (PLVF…YWVV).

Belongs to the OXA1/ALB3/YidC family. Type 1 subfamily. Interacts with the Sec translocase complex via SecD. Specifically interacts with transmembrane segments of nascent integral membrane proteins during membrane integration.

It is found in the cell inner membrane. In terms of biological role, required for the insertion and/or proper folding and/or complex formation of integral membrane proteins into the membrane. Involved in integration of membrane proteins that insert both dependently and independently of the Sec translocase complex, as well as at least some lipoproteins. Aids folding of multispanning membrane proteins. The protein is Membrane protein insertase YidC of Xanthomonas euvesicatoria pv. vesicatoria (strain 85-10) (Xanthomonas campestris pv. vesicatoria).